A 130-amino-acid polypeptide reads, in one-letter code: Small ribosomal subunit protein uS9 (130 aa).

The interval 99–130 (KRAGLLTRDPRMKERKKPGLKAARRSPQFSKR) is disordered. Basic residues predominate over residues 111–130 (KERKKPGLKAARRSPQFSKR).

It belongs to the universal ribosomal protein uS9 family.

The polypeptide is Small ribosomal subunit protein uS9 (Staphylococcus aureus (strain Mu3 / ATCC 700698)).